We begin with the raw amino-acid sequence, 432 residues long: Adenosylhomocysteinase (432 aa).

An N-acetylserine modification is found at Ser2. Substrate-binding residues include Thr57, Asp131, and Glu156. 157–159 (TTT) lines the NAD(+) pocket. Ser183 carries the post-translational modification Phosphoserine. Residues Lys186 and Asp190 each coordinate substrate. The residue at position 186 (Lys186) is an N6-(2-hydroxyisobutyryl)lysine. Tyr193 is subject to Phosphotyrosine. NAD(+) is bound by residues 222-227 (GDVGKG), Glu243, Asn248, 299-301 (IGH), Asn346, and His353.

The protein belongs to the adenosylhomocysteinase family. As to quaternary structure, homotetramer. Interaction with AHCYL1. NAD(+) is required as a cofactor.

It localises to the cytoplasm. It is found in the melanosome. The protein localises to the nucleus. The protein resides in the endoplasmic reticulum. It carries out the reaction S-adenosyl-L-homocysteine + H2O = L-homocysteine + adenosine. It participates in amino-acid biosynthesis; L-homocysteine biosynthesis; L-homocysteine from S-adenosyl-L-homocysteine: step 1/1. Its function is as follows. Catalyzes the hydrolysis of S-adenosyl-L-homocysteine to form adenosine and homocysteine. Binds copper ions. The sequence is that of Adenosylhomocysteinase (AHCY) from Homo sapiens (Human).